Consider the following 418-residue polypeptide: Glutamyl-tRNA reductase (418 aa).

Substrate contacts are provided by residues 49-52 (TCNR), serine 109, 114-116 (EPQ), and glutamine 120. Cysteine 50 serves as the catalytic Nucleophile. Residue 189–194 (GAGETI) participates in NADP(+) binding.

Belongs to the glutamyl-tRNA reductase family. Homodimer.

The enzyme catalyses (S)-4-amino-5-oxopentanoate + tRNA(Glu) + NADP(+) = L-glutamyl-tRNA(Glu) + NADPH + H(+). It functions in the pathway porphyrin-containing compound metabolism; protoporphyrin-IX biosynthesis; 5-aminolevulinate from L-glutamyl-tRNA(Glu): step 1/2. Its function is as follows. Catalyzes the NADPH-dependent reduction of glutamyl-tRNA(Glu) to glutamate 1-semialdehyde (GSA). This is Glutamyl-tRNA reductase from Escherichia coli O9:H4 (strain HS).